A 632-amino-acid chain; its full sequence is tRNA uridine 5-carboxymethylaminomethyl modification enzyme MnmG (632 aa).

FAD-binding positions include 15–20 (GAGHAG), Ile-127, and Ser-182. Residue 276–290 (GPRYCPSIEDKIVRF) participates in NAD(+) binding. Gln-373 contributes to the FAD binding site.

This sequence belongs to the MnmG family. Homodimer. Heterotetramer of two MnmE and two MnmG subunits. It depends on FAD as a cofactor.

It localises to the cytoplasm. In terms of biological role, NAD-binding protein involved in the addition of a carboxymethylaminomethyl (cmnm) group at the wobble position (U34) of certain tRNAs, forming tRNA-cmnm(5)s(2)U34. The protein is tRNA uridine 5-carboxymethylaminomethyl modification enzyme MnmG of Streptococcus pyogenes serotype M6 (strain ATCC BAA-946 / MGAS10394).